The chain runs to 427 residues: Trigger factor (427 aa).

The 86-residue stretch at 165–250 folds into the PPIase FKBP-type domain; it reads GDTVVIDFEG…LHEIQEQVPA (86 aa).

Belongs to the FKBP-type PPIase family. Tig subfamily.

Its subcellular location is the cytoplasm. The catalysed reaction is [protein]-peptidylproline (omega=180) = [protein]-peptidylproline (omega=0). Involved in protein export. Acts as a chaperone by maintaining the newly synthesized protein in an open conformation. Functions as a peptidyl-prolyl cis-trans isomerase. In Sulfurovum sp. (strain NBC37-1), this protein is Trigger factor.